Consider the following 4095-residue polypeptide: MNKNCYKLIFSKTRGCLVPVAECITSAVDSGSSDSVVVSEKTDEEDRQGSIEDYRLSNVCLSVKTFLNPVSSALCLNWKSVSVLLLSMVAAPNFAQSAEEAAKAEKTPKLTEIQNGNDGIQLETKNQNIGVGAGTTENNHPTKLYKTENNVIVIDIAKPNDKGISDNRFQKFNIPNGAVFKNNKDQQRSELVGYLEGNKNLADKEAKVILNQVTGSELSQIKGALEILGTKADLVIANQHGINLNGVQTINAGRFVATTSKLIDPNKMEFDVTQGTVTIDVNGFATDNLPYLDIVAKKIEQKGTIGNKEKEKNKTSETEITFIAGKGKIKYNIENDGKTKLEVQKDSNTSQPSDKEEVAITGASTGAMHGKSIKLIVTEQGAGVKHDGIILSENDIKIESNKGDIDLGDKLQAKNEISLNNAKRITIANEITADKSITITADDVKLKNNKEASATEEAKLKGKGKLASKKVKVEAKKSLVLDDETKVVATDLELKSQTLTNQGRIYGNKVKIDTDKLVNKKEIYAEDNLDITTKGKTVTVSVNKDNKRKADVKEETVADLDVGFENTGTIESKSKAKLTFKDNTSFVSKGNKFIKAKDELTIDAQNVVISENDELQTTARLTINAAGNVVNNGLLASGKTLTINAKQGSIYNEKGILGAREQLTLSAKGNNKETEGNIINGADSLLHSEGKMELDAENTVYNLGNIFAKSDLTVKANELINDVKLSGSITKKSPYSVLNRYRRSDIASHGWHNNDYRLWINPIEFEKAEVKVEKAGLIRAEGNFKFEGKKGDNQQDATLTNHGVINVKNTFEAQNAKVVNNMKAYQANLLTEFFKQKQDITFNYQPRARLFLSALSGQAERKFNSLEELFDGLFSEQPITNSSSYYADNSQAVHLLEEIKSPTFQKAMTLVFGANWKNEDHKKLSQRWKEFKEKQDAHFDYRPTDKAKILAQRINGKIDELKNGSTGGFSESERITVGQHKFDLSKVEFRSEVNRKENLNNSNVDLSALSDLLSIPNLFVDNSVQLDKTVDKNIEIDEEDEFLLKPHTGEEPDLLNENELSENGKFLDKLLGEIGEKTYIREVSDDWERDPDEPDEPDYKTESRLETRDRFDTLPSEVQDKLRQKFNEYKEKAQQKRQAEALQAKTKNEQLQSDLETGYKEEEKRQAKNDLEKQAELQQLDQQEKEKLAKEKELQGKINEEKQQEALAKQKQEQQKQADAKAKIEEEKRLEEYRKELAKDHQIEEALSKNQFLKEVDDTRPKVETDPLYRTKLQYINQDEYFGSKYFLNKVGSSTDAGKKVAVIGDNYLEHQLITKSIEKKVDNHLALKYQVNDAQLVKKLIDNSYFESKELGLKVGEALTKEQQNQLKQDIVWYVKANINNKEVLLPQVYFANKTLRDAEKFKGLGDALIRANEINLKTRDVLNSGTISGKNIDIEAENKIKNRGDILSEESTRLVGHKGIDNTARSFVNGNGDVEVQRASIRTEGHLHLEADEDSDINSKGSDIKGKTGFVKARNFNTTDTHRTEHSVEKGRIFSKKGEILGYRKESTQKAISVGSNTEFDHVHFAIKNDVNQEGSKIKAKVVTGVVQGDYNTKAGRNAQQTERYIRLDQEYSSGHISGAGFTVSHERDSQNGEKTNIGGASSNTGTGFTLGGSFSETREKETSLTHTNSDLQVDHGILHVLKKAEIGGVDINKHKFTGKAVEEDEAKAEQQAKAKAAPDATDNAAQKEEPKFKVLSQSEVDDLMTEKSANDLFNKYKKVKEDEGFELSAKEITSNKQKDEYHLDSERSVLKFGIETEGHSAIADAVSHVAKEIVEAQRGVKQDGTVALQHISDVANIVTGELVGGSSKFGFERNYETNKVKETSDIRTKIAGNITLSAHGGNLQLKNVESDANSKLTLQAKRNVDILDGETTRESTERQSRQKFAFGINSGCSVMSGGCNGGVSGSVDGNESFTTEKSVTHNNSLLRAKNLKIAAGKDLNLISSNIKADHLDLNIKGKTNIVSKQDSFDRLYRGFDFSASAGAALSSSTLVKGNGSFGAGYTHEVENRKLLNQQAGIVANRITGQIKDLDLVAAHFINKDENSGFRVSGNVTSQQLNDSHHKDGGSVGVSVGINERGASSFNVRGGRAEQKHYDAVQKSVISGINLKDNNVTGEIVDDLSKAKTVTRDDVYASTQFNFEVADLVELGEKAKSKLQSKFSKAVNNDAEQPTTTRISSEDVVEMVDNPLYGSNADVRKLRTLDEVGEGYSTLGDQNANKGRKLPNGSDDIYSLLGKVKVSGDEPVYDKVSAEGAYDLLGDSNANKGRTLRNNSDDLYSTVGDANSDISRIRSNVYDEIAAGPYSLLGRTKAAEEHIYEQIGEGPYSLLGNGSAVRNRTLGGESNSTYSTVGDANSDISRIRSNVYDEIVAGPYSLLGKPKAAEEHIYEQIGEGPYSLLGNGSAVRNRTLGGESDSPYSTVGDANSDISRIRSNVYDEIVAGPYSLLGRTKAAEEHIYEQIGEGPYSLLGNGSAVRNRTLGGESDSPYSLLGGEGTRNKVLADTIESIYSTLSRPQASSNLEMVDNPLYDSVRRSASDQLPELPTVRNLLNSDTEAGNGTYSEITSRTRNANDPLPPLPNEFRTRLSQGADLADHVYDTIGSIYSVLSKPKASSNLEMVDNPLYGSVRRAAGDQLPELPTVKTLLNKVEEVGNEIYSEITSKTRSANDPLPALPNFRLTQEVDTADHIYADINDVVNRANKAKRDLPATPEATPKVAVDGGDYATIGEVSPLQPRASRQQGSSDYEEIPLPQETAPQKTSPVKRTSAEGEDGYATIAEVLQPRAAKGQVSDYETIPLDEPSQAAVRTERSAVEGDYAEITSPSIQPRSARGQSGGEEFEPFPSEFSSEPQSPKRALPAENAVVNELGNELKARLKSKEDQANPAKAEVSEPIYATLDKSPEGLARAKAKGDEAAAANPIVKTRVEDDVAPELPARPSNLSDSISNETIAENGQSVALGTPKSAVAESNRNNNGNQKLQSEGAEGVSPKTKSEDKSWFAKVKDFFFAKSNKSQAKEAKSEQETVSKPNYDSLEDDLNLKNLLALEDKRGSSFEENVLKNPEFLAEAREIAKKYIPEATIKQMGNSPEFDEILTEGAKKVEKRINDALTFKPSVDEFNEIQGLVKNIQKGSAVDDLNAQTLAITEALADTSKTIQRNPKLKEEVQGAIEEFLKSSQGKELTVEMIEKLNHGLRPDEGSDRLLYKKENLTKENAVFSSPQASKIQLNETVDFINQAIKQNVEPSVLAGLVYQRLIAYHPFAEGNGRMARVVVNKILLDAGYPPFTKFSSEFETQIIPQTKATAKSATSAEVVKEFLTELGKKSSPQEGGANNQNGQATSPVTLKSKDVSEVENTQSADSLTIKQPEQGKAGGQLPSVPKVETSVNEVAPLSSVPAELKDAAGGNKKAAEKSEGATGVEKEKTTLFQRVKQFFTGSKSGAKPVAGDETANKVNYQDLEDNLNLKGLISLEDDRNANFESNVLKNEKFLDEAREISKKSIPEATVKQMSHLPEFDDILTEGAKKVESRINKAITFRPSVEEFSEIQDLVKTLPKTKVIEDLSTKTNEITEALAATSKTIQRTPELKEQLKTAIEDFLQNSQGKPLTVQMIENLNHGLRPDEGEGRLLYKKENLTKENAVFSSPEAAKIQLAETVDFINRAKNEGIEPSVVGALVYQRLIAYHPFAEGNGRMARVIVNKILLDAGYPAFTKFSDEFEPQIIPQTKASTKSATSSEVVVEFLKELAKKGSKEDNEQNLEKTDRTSTDLTESAVENSAALSSGTVRSATVSETVTETEQAKAKPVSDLVSSKDLVEQQRTVLQRIQDQFQPLKVKSKIDAVRSSVEEFGGEVSFKFAQSKGEVYKEIVKHIETQNGVCESTCAHWIAKNVNPTDENFFNTLYEGGKKGHLKKETIDSIKKLQTEFINSGSATQQFKLTDSWLQEQGVVPKEKKVADFVRRDEVSGTVSKNDVSSLVKAILDTGDDTAGVKKISINLEGGSHTVSAAVDGSKVTFFDPNFGEMTFPTHQQFENWLKNAFWQKSGYAGKQEGRRFFNVVNYKKNN.

Positions 1–97 are cleaved as a signal peptide; it reads MNKNCYKLIF…MVAAPNFAQS (97 aa). 2 binds bovine IgG2 Fc regions span residues 972 to 1515 and 1116 to 1255; these read SERI…FVKA and SEVQ…FLKE. Disordered regions lie at residues 1082-1117, 1130-1154, 1204-1223, 1625-1652, and 1705-1732; these read EVSD…LPSE, KEKA…LQSD, QEAL…AKAK, TVSH…TGFT, and EEDE…QKEE. Positions 1087–1096 are enriched in acidic residues; sequence WERDPDEPDE. Composition is skewed to basic and acidic residues over residues 1097-1117 and 1130-1139; these read PDYK…LPSE and KEKAQQKRQA. Residues 1116–1247 are a coiled coil; it reads SEVQDKLRQK…AKDHQIEEAL (132 aa). Residues 1716-1727 show a composition bias toward low complexity; sequence KAKAAPDATDNA. Repeat copies occupy residues 2250 to 2271, 2272 to 2295, 2296 to 2317, 2318 to 2343, 2344 to 2365, 2366 to 2387, 2388 to 2413, 2414 to 2435, 2436 to 2457, 2458 to 2483, 2484 to 2505, and 2506 to 2527. The interval 2250 to 2527 is 12 X 22 AA approximate repeats; the sequence is YSTLGDQNAN…RTLGGESDSP (278 aa). 2 stretches are compositionally biased toward polar residues: residues 2592 to 2611 and 2794 to 2803; these read SDTE…TRNA and TAPQKTSPVK. Disordered stretches follow at residues 2592 to 2617, 2765 to 2809, 2825 to 2894, 2914 to 2933, 2943 to 3033, and 3049 to 3069; these read SDTE…PLPP, TIGE…SAEG, AKGQ…SPKR, LKSK…EPIY, LARA…KSED, and NKSQ…PNYD. Low complexity predominate over residues 2880-2889; sequence PFPSEFSSEP. Composition is skewed to polar residues over residues 2977 to 2996 and 3005 to 3018; these read SNLS…QSVA and AESN…QKLQ. A compositionally biased stretch (basic and acidic residues) spans 3052 to 3062; it reads QAKEAKSEQET. A Fido 1 domain is found at 3218 to 3355; it reads LTVEMIEKLN…AEVVKEFLTE (138 aa). Residues 3222 to 4095 are yopT-like; sequence MIEKLNHGLR…FNVVNYKKNN (874 aa). The tract at residues 3354–3698 is binds bovine IgG2 Fc; that stretch reads TELGKKSSPQ…VDFINRAKNE (345 aa). Disordered regions lie at residues 3357-3415 and 3432-3454; these read GKKS…PSVP and AELK…ATGV. Polar residues-rich tracts occupy residues 3360 to 3379 and 3388 to 3401; these read SSPQ…SPVT and VENT…TIKQ. The span at 3443–3454 shows a compositional bias: basic and acidic residues; it reads KAAEKSEGATGV. Positions 3535 to 3557 are arm region; it reads IPEATVKQMSHLPEFDDILTEGA. One can recognise a Fido 2 domain in the interval 3640–3777; sequence LTVQMIENLN…SEVVVEFLKE (138 aa). ATP contacts are provided by residues 3670-3671, 3722-3724, R3728, and Q3757; these read KE and GNG. Basic and acidic residues predominate over residues 3783 to 3798; it reads SKEDNEQNLEKTDRTS. The segment at 3783–3829 is disordered; the sequence is SKEDNEQNLEKTDRTSTDLTESAVENSAALSSGTVRSATVSETVTET. Over residues 3799–3815 the composition is skewed to polar residues; sequence TDLTESAVENSAALSSG. Over residues 3816–3829 the composition is skewed to low complexity; sequence TVRSATVSETVTET. Active-site for cysteine protease activity residues include C3910, H4033, and D4048.

It in the central section; belongs to the fic family. In the C-terminal section; belongs to the peptidase C58 family. In terms of assembly, immunoglobulin-binding protein. In terms of processing, the long form of the protein is probably processed, and/or the transcript may be subject to differential translational initiation.

It localises to the secreted. The protein resides in the cell outer membrane. The enzyme catalyses L-tyrosyl-[protein] + ATP = O-(5'-adenylyl)-L-tyrosyl-[protein] + diphosphate. It carries out the reaction L-threonyl-[protein] + ATP = 3-O-(5'-adenylyl)-L-threonyl-[protein] + diphosphate. Functionally, adenylyltransferase involved in virulence by mediating the addition of adenosine 5'-monophosphate (AMP) to specific tyrosine residue of host Rho GTPases RhoA, Rac and Cdc42. The resulting AMPylation inactivates Rho GTPases, thereby inhibiting actin assembly in infected cells. Probably also acts as a cysteine protease, which may play a central role after invasion of host cell and in virulence. Possible member (with IbpB) of a 2 partner secretion. Probably able to bind bovine epithelial cells (host cells). May participate in the formation of fibrils at the surface of the bacteria. The sequence is that of Protein adenylyltransferase and cysteine protease IbpA (ibpA) from Histophilus somni (strain 2336) (Haemophilus somnus).